The chain runs to 247 residues: Agamous-like MADS-box protein FUL-L (247 aa).

Residues 1-61 enclose the MADS-box domain; that stretch reads MGRGRVQLKR…GKLFEYSSDS (61 aa). The region spanning 88–178 is the K-box domain; the sequence is QGNWSMDYPK…AKKVKEKEKV (91 aa). The disordered stretch occupies residues 224-247; the sequence is EDGAEARPSPNTLMPPWMLRHVNE.

In terms of tissue distribution, expressed in tendrils and flowers.

It localises to the nucleus. Its function is as follows. Probable transcription factor involved in flower development. In Vitis vinifera (Grape), this protein is Agamous-like MADS-box protein FUL-L.